The chain runs to 235 residues: 7-cyano-7-deazaguanine synthase (235 aa).

Position 16-26 (16-26 (FSGGQDSTTCL)) interacts with ATP. Positions 195, 204, 207, and 210 each coordinate Zn(2+).

It belongs to the QueC family. Requires Zn(2+) as cofactor.

It carries out the reaction 7-carboxy-7-deazaguanine + NH4(+) + ATP = 7-cyano-7-deazaguanine + ADP + phosphate + H2O + H(+). It functions in the pathway purine metabolism; 7-cyano-7-deazaguanine biosynthesis. Its function is as follows. Catalyzes the ATP-dependent conversion of 7-carboxy-7-deazaguanine (CDG) to 7-cyano-7-deazaguanine (preQ(0)). This chain is 7-cyano-7-deazaguanine synthase, found in Shewanella frigidimarina (strain NCIMB 400).